A 377-amino-acid polypeptide reads, in one-letter code: Endoplasmic reticulum-Golgi intermediate compartment protein 2 (377 aa).

Residues 1-33 (MRRLNRRKTLSLVKELDAFPKVPDSYVETSASG) are Cytoplasmic-facing. A helical membrane pass occupies residues 34-54 (GTVSLIAFTTMALLTIMEFSV). Residues 55 to 319 (YQDTWMKYEY…PFWQFFVRLC (265 aa)) are Lumenal-facing. Residues 320 to 340 (GIIGGIFSTTGMLHGIGKFIV) traverse the membrane as a helical segment. Residues 341–377 (EIICCRFRLGSYKPVRSVPFADGHTDNHLPLLENNTH) lie on the Cytoplasmic side of the membrane.

The protein belongs to the ERGIC family. May form a heteromeric complex composed of ERGIC1, ERGIC2 and ERGIC3. Interacts with ERGIC3, the interaction is required for the stable expression of both proteins. May interact with EEF1A1.

Its subcellular location is the endoplasmic reticulum-Golgi intermediate compartment membrane. It localises to the golgi apparatus. The protein localises to the cis-Golgi network membrane. It is found in the endoplasmic reticulum membrane. The protein resides in the cytoplasm. Its subcellular location is the nucleus. In terms of biological role, possible role in transport between endoplasmic reticulum and Golgi. This Mus musculus (Mouse) protein is Endoplasmic reticulum-Golgi intermediate compartment protein 2 (Ergic2).